Reading from the N-terminus, the 212-residue chain is Pyridoxine/pyridoxamine 5'-phosphate oxidase (212 aa).

FMN contacts are provided by residues 61 to 66 (RTVLLK), 76 to 77 (FT), K82, K83, and Q105. K66 is a binding site for substrate. Positions 123, 127, and 131 each coordinate substrate. Residues 140 to 141 (QS) and W185 contribute to the FMN site. 191-193 (RLH) contributes to the substrate binding site. R195 is a binding site for FMN.

Belongs to the pyridoxamine 5'-phosphate oxidase family. Homodimer. It depends on FMN as a cofactor.

It catalyses the reaction pyridoxamine 5'-phosphate + O2 + H2O = pyridoxal 5'-phosphate + H2O2 + NH4(+). It carries out the reaction pyridoxine 5'-phosphate + O2 = pyridoxal 5'-phosphate + H2O2. It participates in cofactor metabolism; pyridoxal 5'-phosphate salvage; pyridoxal 5'-phosphate from pyridoxamine 5'-phosphate: step 1/1. It functions in the pathway cofactor metabolism; pyridoxal 5'-phosphate salvage; pyridoxal 5'-phosphate from pyridoxine 5'-phosphate: step 1/1. Functionally, catalyzes the oxidation of either pyridoxine 5'-phosphate (PNP) or pyridoxamine 5'-phosphate (PMP) into pyridoxal 5'-phosphate (PLP). The sequence is that of Pyridoxine/pyridoxamine 5'-phosphate oxidase from Vesicomyosocius okutanii subsp. Calyptogena okutanii (strain HA).